Consider the following 302-residue polypeptide: MADTIFSSGNDQWVCPNDRQLALRAKLQTGWSVHTYQTEKQRRSQCLSPGELEIILQVIQRAERLDILEQQRIGRLVERLETMQRNVMGNGLSQCLLCGEVLGFLGSSSVFCKDCRKKVCTKCGIEASPGQKRPLWLCKICSEQREVWKRSGAWFYKGLPKYILPLKTPGRADDPHFRPLPVEPTETQPPSAETSRVYTWARGRVVSSDSDSDSDLSSSSLEDRPLPSGVKGTKGDKPRGDSGASMESPRLGPARPPSHLSGSQSSLGSEAGTGATEPQGGTPAQPEPRVPGKRHTWATPRY.

A RabBD domain is found at 41–158 (QRRSQCLSPG…KRSGAWFYKG (118 aa)). The segment at 89–146 (GNGLSQCLLCGEVLGFLGSSSVFCKDCRKKVCTKCGIEASPGQKRPLWLCKICSEQRE) adopts an FYVE-type zinc-finger fold. Zn(2+) is bound by residues Cys-95, Cys-98, Cys-112, Cys-115, Cys-120, Cys-123, Cys-138, and Cys-141. A disordered region spans residues 174–302 (DPHFRPLPVE…KRHTWATPRY (129 aa)). Polar residues predominate over residues 185-197 (TETQPPSAETSRV). Ser-248 carries the post-translational modification Phosphoserine. The span at 258 to 269 (SHLSGSQSSLGS) shows a compositional bias: low complexity.

In terms of assembly, recruited to dense-core vesicles through specific interaction with RAB27A in endocrine cells. Interacts with RAB3A, RAB3B, RAB3C and RAB3D. Interacts with ZYX. Highly expressed in pancreatic islets. High to moderate expression in adrenal gland, pituitary gland and ovary.

It is found in the cytoplasm. Its subcellular location is the cytoplasmic vesicle. The protein resides in the secretory vesicle membrane. Its function is as follows. Rab GTPase effector involved in the late steps of regulated exocytosis, both in endocrine and exocrine cells. Regulates the exocytosis of dense-core vesicles in neuroendocrine cells through interaction with RAB27A. Acts as a potential RAB3B effector protein in epithelial cells. The polypeptide is Rab effector Noc2 (Rph3al) (Mus musculus (Mouse)).